A 150-amino-acid polypeptide reads, in one-letter code: UPF0178 protein PputW619_5044 (150 aa).

Belongs to the UPF0178 family.

The chain is UPF0178 protein PputW619_5044 from Pseudomonas putida (strain W619).